Consider the following 299-residue polypeptide: Acetylglutamate kinase (299 aa).

Substrate-binding positions include 72–73 (GG), Arg-94, and Asn-196.

This sequence belongs to the acetylglutamate kinase family. ArgB subfamily.

It is found in the cytoplasm. It carries out the reaction N-acetyl-L-glutamate + ATP = N-acetyl-L-glutamyl 5-phosphate + ADP. It participates in amino-acid biosynthesis; L-arginine biosynthesis; N(2)-acetyl-L-ornithine from L-glutamate: step 2/4. Catalyzes the ATP-dependent phosphorylation of N-acetyl-L-glutamate. The chain is Acetylglutamate kinase from Paraburkholderia phymatum (strain DSM 17167 / CIP 108236 / LMG 21445 / STM815) (Burkholderia phymatum).